The following is a 300-amino-acid chain: Protoheme IX farnesyltransferase (300 aa).

9 helical membrane-spanning segments follow: residues 24–44 (VTQL…PGMV), 46–66 (WHVL…AFAI), 94–114 (PQIL…LYTF), 118–138 (LTMW…TLLL), 146–166 (IVIG…AVTG), 172–192 (AWIL…VLAL), 217–237 (LHIL…FISG), 239–259 (SGAV…AYAW), and 278–298 (IVYL…RPLL).

It belongs to the UbiA prenyltransferase family. Protoheme IX farnesyltransferase subfamily.

The protein localises to the cell inner membrane. The catalysed reaction is heme b + (2E,6E)-farnesyl diphosphate + H2O = Fe(II)-heme o + diphosphate. It functions in the pathway porphyrin-containing compound metabolism; heme O biosynthesis; heme O from protoheme: step 1/1. In terms of biological role, converts heme B (protoheme IX) to heme O by substitution of the vinyl group on carbon 2 of heme B porphyrin ring with a hydroxyethyl farnesyl side group. This is Protoheme IX farnesyltransferase from Burkholderia cenocepacia (strain HI2424).